A 140-amino-acid polypeptide reads, in one-letter code: Oocyte zinc finger protein XlCOF15 (140 aa).

5 consecutive C2H2-type zinc fingers follow at residues 6-28 (FTCK…QKIH), 34-56 (FTCT…QKVH), 62-84 (FICT…HVIH), 90-112 (FTCA…RAAH), and 118-140 (FICT…LKSH).

This sequence belongs to the krueppel C2H2-type zinc-finger protein family.

It is found in the nucleus. Its function is as follows. May be involved in transcriptional regulation. This chain is Oocyte zinc finger protein XlCOF15, found in Xenopus laevis (African clawed frog).